We begin with the raw amino-acid sequence, 356 residues long: Alanine racemase (356 aa).

The active-site Proton acceptor; specific for D-alanine is the lysine 35. The residue at position 35 (lysine 35) is an N6-(pyridoxal phosphate)lysine. Arginine 130 provides a ligand contact to substrate. The Proton acceptor; specific for L-alanine role is filled by tyrosine 253. Methionine 301 is a binding site for substrate.

The protein belongs to the alanine racemase family. It depends on pyridoxal 5'-phosphate as a cofactor.

It carries out the reaction L-alanine = D-alanine. It functions in the pathway amino-acid biosynthesis; D-alanine biosynthesis; D-alanine from L-alanine: step 1/1. Its function is as follows. Catalyzes the interconversion of L-alanine and D-alanine. May also act on other amino acids. The chain is Alanine racemase (alr) from Burkholderia mallei (strain NCTC 10229).